A 78-amino-acid polypeptide reads, in one-letter code: DNA-directed RNA polymerase subunit omega (78 aa).

It belongs to the RNA polymerase subunit omega family. In terms of assembly, in cyanobacteria the RNAP catalytic core is composed of 2 alpha, 1 beta, 1 beta', 1 gamma and 1 omega subunit. When a sigma factor is associated with the core the holoenzyme is formed, which can initiate transcription.

The catalysed reaction is RNA(n) + a ribonucleoside 5'-triphosphate = RNA(n+1) + diphosphate. Functionally, promotes RNA polymerase assembly. Latches the N- and C-terminal regions of the beta' subunit thereby facilitating its interaction with the beta and alpha subunits. This chain is DNA-directed RNA polymerase subunit omega, found in Prochlorococcus marinus (strain MIT 9301).